Reading from the N-terminus, the 36-residue chain is Photosystem I reaction center subunit VIII (36 aa).

Residues 8-28 form a helical membrane-spanning segment; that stretch reads SILVPLVGLVFPAIAMASLFL.

It belongs to the PsaI family.

The protein localises to the plastid. It localises to the chloroplast thylakoid membrane. May help in the organization of the PsaL subunit. In Vitis vinifera (Grape), this protein is Photosystem I reaction center subunit VIII.